The sequence spans 360 residues: GTPase Obg (360 aa).

The 156-residue stretch at 1-156 (MFVDSVEIII…KCVRLELKLI (156 aa)) folds into the Obg domain. The region spanning 157–360 (ADIGLVGFPN…LKFVLLEALP (204 aa)) is the OBG-type G domain. GTP is bound by residues 163 to 170 (GFPNAGKS), 188 to 192 (FTTLV), 210 to 213 (DIPG), 279 to 282 (NKCD), and 341 to 343 (SAV). Residues Ser170 and Thr190 each coordinate Mg(2+).

The protein belongs to the TRAFAC class OBG-HflX-like GTPase superfamily. OBG GTPase family. In terms of assembly, monomer. It depends on Mg(2+) as a cofactor.

Its subcellular location is the cytoplasm. Its function is as follows. An essential GTPase which binds GTP, GDP and possibly (p)ppGpp with moderate affinity, with high nucleotide exchange rates and a fairly low GTP hydrolysis rate. Plays a role in control of the cell cycle, stress response, ribosome biogenesis and in those bacteria that undergo differentiation, in morphogenesis control. This is GTPase Obg from Helicobacter acinonychis (strain Sheeba).